The primary structure comprises 639 residues: Serine/threonine-protein kinase PAK mbt (639 aa).

The 14-residue stretch at 11-24 folds into the CRIB domain; it reads ISMPSNFEHRVHTG. Positions 25 to 367 are linker; sequence FDKRENKYVG…VVSAGDPREN (343 aa). Disordered regions lie at residues 79–195 and 222–345; these read HHNN…SLLY and RSNL…QDQR. Low complexity-rich tracts occupy residues 91–129, 138–159, 227–241, and 274–295; these read NSSSTMMMGSMAPMNPMAPGAHPMMSHGPGMMMPPETGG, VARSNSLRSSSPPRVRRVANVP, PPSGGSMPQQQQTSP, and QQQQQQQQQAKQGGDQNQNPLH. The span at 296-308 shows a compositional bias: basic residues; the sequence is PHAHPHPHHHQHL. The segment covering 309–331 has biased composition (low complexity); the sequence is AKSASRASSSSGGASSAAQQASG. Positions 368–619 constitute a Protein kinase domain; it reads LDHFNKIGEG…AAELLAHPFL (252 aa). ATP is bound by residues 374–382 and lysine 397; that span reads IGEGSTGTV. The active-site Proton acceptor is the aspartate 487. Serine 521 carries the post-translational modification Phosphoserine. Residue threonine 525 is modified to Phosphothreonine.

The protein belongs to the protein kinase superfamily. STE Ser/Thr protein kinase family. STE20 subfamily. As to quaternary structure, interacts tightly with GTP-bound but not GDP-bound Cdc42 and weakly with Rac1. Mg(2+) is required as a cofactor. Post-translationally, autophosphorylated when activated by Cdc42. As to expression, expressed in adult brain and eye. High levels detected in developing photoreceptor cells and future bristle cells, and lower levels in cone and pigment cells, as detected in third instar eye imaginal disks (at protein level).

The protein resides in the cell junction. The protein localises to the adherens junction. It is found in the cell membrane. It carries out the reaction L-seryl-[protein] + ATP = O-phospho-L-seryl-[protein] + ADP + H(+). The catalysed reaction is L-threonyl-[protein] + ATP = O-phospho-L-threonyl-[protein] + ADP + H(+). Functionally, involved in neurogenesis of the adult central nervous system, and together with Cdc42, regulates photoreceptor cell morphogenesis. Phosphorylates exogenous substrates when activated by Cdc42. This is Serine/threonine-protein kinase PAK mbt from Drosophila melanogaster (Fruit fly).